We begin with the raw amino-acid sequence, 358 residues long: Neutral protease 2 homolog PABG_02362 (358 aa).

The first 19 residues, 1–19 (MRRVSGILAVAAFTISAFA), serve as a signal peptide directing secretion. Positions 20–182 (GVIQPVAKDA…FAAMNQFVKI (163 aa)) are excised as a propeptide. Cystine bridges form between cysteine 188–cysteine 259 and cysteine 266–cysteine 284. A glycan (N-linked (GlcNAc...) asparagine) is linked at asparagine 249. Histidine 309 is a Zn(2+) binding site. Glutamate 310 is an active-site residue. Residues histidine 313 and aspartate 324 each contribute to the Zn(2+) site.

It belongs to the peptidase M35 family. Zn(2+) serves as cofactor.

Its subcellular location is the secreted. The enzyme catalyses Preferential cleavage of bonds with hydrophobic residues in P1'. Also 3-Asn-|-Gln-4 and 8-Gly-|-Ser-9 bonds in insulin B chain.. Secreted metalloproteinase that allows assimilation of proteinaceous substrates. Shows high activities on basic nuclear substrates such as histone and protamine. The sequence is that of Neutral protease 2 homolog PABG_02362 from Paracoccidioides brasiliensis (strain Pb03).